A 2006-amino-acid polypeptide reads, in one-letter code: Supporter of activation of yellow protein (2006 aa).

Disordered stretches follow at residues 1-208 (MNDL…RRVE), 313-347 (MPAKNDAHLSSLSPASASSSSASSSSSSSSSSSLA), 458-564 (EEKP…AQSQ), 744-794 (DTQD…DPAR), 821-916 (DLEG…KSRR), 929-1029 (VSVG…NNNS), 1044-1082 (CSSSSSTSSGAAANQQVIGGSGSSSMLPPTTILSSSDPL), and 1099-1196 (QQLR…SAVA). A compositionally biased stretch (low complexity) spans 10-60 (VAATSSSGSESGTAVESAAATSTAGSAGAAGRPQSNCSANSNAKSVAASST). The segment covering 67 to 81 (VSSTSSPAQRDQQLN) has biased composition (polar residues). Over residues 118 to 128 (SPPPTLPPPTT) the composition is skewed to pro residues. Residues 129–168 (PCDDAPSTTGASASASSASGEAPSAASAAGAAGGPMAATA) are compositionally biased toward low complexity. The segment covering 189–199 (ANPNSNANESQ) has biased composition (polar residues). Low complexity predominate over residues 321 to 347 (LSSLSPASASSSSASSSSSSSSSSSLA). Residues 485 to 494 (GGESNSSSQE) are compositionally biased toward polar residues. Over residues 525–534 (SLSKEHDPKI) the composition is skewed to basic and acidic residues. A compositionally biased stretch (low complexity) spans 543–563 (ASNGIASGGSKASKASKSAQS). Basic and acidic residues predominate over residues 744–758 (DTQDNNNENHLKRTN). Composition is skewed to polar residues over residues 759–769 (SEGNESPSSRL) and 828–844 (PPTQQQSISTPDQNGAL). The span at 861 to 870 (PATPQPPPVA) shows a compositional bias: pro residues. Basic and acidic residues-rich tracts occupy residues 936–945 (ADMKAKEKES) and 963–972 (ESPKTRDHRP). Composition is skewed to low complexity over residues 978–990 (RTTTSTNTNLQPT) and 1018–1029 (SSESESNNNNNS). The span at 1053–1080 (GAAANQQVIGGSGSSSMLPPTTILSSSD) shows a compositional bias: polar residues. A compositionally biased stretch (low complexity) spans 1103 to 1112 (SSRPSSISCG). Over residues 1147–1158 (GRGRGRRSRGGR) the composition is skewed to basic residues. A compositionally biased stretch (low complexity) spans 1161 to 1173 (GSSSVDRAVSVGG). The SAY stretch occupies residues 1340–1573 (MIQEQVALYL…PPTDLMAQLL (234 aa)). The disordered stretch occupies residues 1579–1685 (AVGSDEIKTS…AGSEDEDGNE (107 aa)). Low complexity-rich tracts occupy residues 1627–1652 (TASSSSTSSAQSVSSASSGNGSSSDT) and 1660–1677 (FSSTSSCSSSTGASSGAG). Residues 1694–1751 (TCGVCLRSQHRNARDMPEAFIRCYTCRKRVHPSCVDMPPRMVGRVRNYNWQCAGCKCC) form a PHD-type 1; degenerate zinc finger. A PHD-type 2; degenerate zinc finger spans residues 1753-1796 (KCRSSQRPGKMLYCEQCDRGYHIYCLGLRTVPDGRWSCERCCFC). A disordered region spans residues 1887–1911 (TSAQTDDSPMPSPGLTTNGGRALSP).

This sequence belongs to the SAYP family. Widely expressed. Highly expressed in ovary. Expressed in nursing cells and growing oocytes at all stages of development and accumulates in mature oocytes. Expressed in the nuclei of syncytium blastoderm of early embryos and in the nuclei of different tissues of late embryos, larvae, and adults.

The protein resides in the nucleus. It localises to the cytoplasm. It is found in the chromosome. In terms of biological role, essential transcription regulator during early development. Coactivates transcription of some euchromatin genes and repress transcription in of euchromatin genes translocated to heterochromatin. The polypeptide is Supporter of activation of yellow protein (e(y)3) (Drosophila melanogaster (Fruit fly)).